The chain runs to 232 residues: Vesicle transport through interaction with t-SNAREs homolog 1B (232 aa).

Alanine 2 bears the N-acetylalanine mark. Interaction with CLINT1 stretches follow at residues 2-23 (ATSA…GLLE) and 69-73 (APLTF). Topologically, residues 2-208 (ATSAASSEHF…SRKVITNKLL (207 aa)) are cytoplasmic. Residues 36–98 (AGTEEKKKLV…AKLHREVRST (63 aa)) are a coiled coil. A Phosphothreonine modification is found at threonine 103. The residue at position 107 (arginine 107) is an Omega-N-methylarginine. At serine 138 the chain carries Phosphoserine. A coiled-coil region spans residues 160–201 (GSEIIEELGEQRDQLERTKSRLVNTNENLSKSRKILRSMSRK). A helical; Anchor for type IV membrane protein membrane pass occupies residues 209 to 229 (LSVIIVLELAILVGLVYYKFF). At 230-232 (RHH) the chain is on the vesicular side.

Belongs to the VTI1 family. As to quaternary structure, forms a SNARE complex with STX7, STX8 and VAMP8 which functions in the homotypic fusion of late endosomes. Component of the SNARE complex composed of STX7, STX8, VAMP7 and VIT1B that is required for heterotypic fusion of late endosomes with lysosomes. May interact with STX17. Interacts with CLINT1.

It is found in the early endosome membrane. It localises to the late endosome membrane. The protein localises to the lysosome membrane. The protein resides in the cytoplasmic granule. Its subcellular location is the recycling endosome membrane. In terms of biological role, V-SNARE that mediates vesicle transport pathways through interactions with t-SNAREs on the target membrane. These interactions are proposed to mediate aspects of the specificity of vesicle trafficking and to promote fusion of the lipid bilayers. The sequence is that of Vesicle transport through interaction with t-SNAREs homolog 1B (Vti1b) from Rattus norvegicus (Rat).